The primary structure comprises 99 residues: Plastocyanin (99 aa).

In terms of domain architecture, Plastocyanin-like spans 1–99; it reads IEVLLGSDDG…AGMVGKVTVN (99 aa). The Cu cation site is built by His-37, Cys-84, His-87, and Met-92.

This sequence belongs to the plastocyanin family. The cofactor is Cu(2+).

The protein localises to the plastid. The protein resides in the chloroplast thylakoid membrane. Participates in electron transfer between P700 and the cytochrome b6-f complex in photosystem I. In Solanum crispum (Chilean potato-tree), this protein is Plastocyanin (PETE).